A 234-amino-acid chain; its full sequence is Leucyl/phenylalanyl-tRNA--protein transferase (234 aa).

The protein belongs to the L/F-transferase family.

It localises to the cytoplasm. The enzyme catalyses N-terminal L-lysyl-[protein] + L-leucyl-tRNA(Leu) = N-terminal L-leucyl-L-lysyl-[protein] + tRNA(Leu) + H(+). The catalysed reaction is N-terminal L-arginyl-[protein] + L-leucyl-tRNA(Leu) = N-terminal L-leucyl-L-arginyl-[protein] + tRNA(Leu) + H(+). It catalyses the reaction L-phenylalanyl-tRNA(Phe) + an N-terminal L-alpha-aminoacyl-[protein] = an N-terminal L-phenylalanyl-L-alpha-aminoacyl-[protein] + tRNA(Phe). Its function is as follows. Functions in the N-end rule pathway of protein degradation where it conjugates Leu, Phe and, less efficiently, Met from aminoacyl-tRNAs to the N-termini of proteins containing an N-terminal arginine or lysine. This Pseudoalteromonas atlantica (strain T6c / ATCC BAA-1087) protein is Leucyl/phenylalanyl-tRNA--protein transferase.